We begin with the raw amino-acid sequence, 189 residues long: UPF0301 protein PST_3956 (189 aa).

Belongs to the UPF0301 (AlgH) family.

The protein is UPF0301 protein PST_3956 of Stutzerimonas stutzeri (strain A1501) (Pseudomonas stutzeri).